We begin with the raw amino-acid sequence, 253 residues long: Transmembrane protein 69 (253 aa).

Helical transmembrane passes span 104–124 (ALYL…LMNV), 137–157 (VAYG…FAIP), 165–185 (DWMN…ALLF), 192–212 (AAVL…ALLP), and 223–243 (AILT…SSVY).

It is found in the membrane. This chain is Transmembrane protein 69 (tmem69), found in Xenopus tropicalis (Western clawed frog).